We begin with the raw amino-acid sequence, 25 residues long: Germin-like protein (25 aa).

Belongs to the germin family.

The protein is Germin-like protein of Populus euphratica (Euphrates poplar).